We begin with the raw amino-acid sequence, 437 residues long: UDP-N-acetylmuramate--L-alanine ligase (437 aa).

ATP is bound at residue 108–114; it reads GAHGKTS.

This sequence belongs to the MurCDEF family.

The protein localises to the cytoplasm. It catalyses the reaction UDP-N-acetyl-alpha-D-muramate + L-alanine + ATP = UDP-N-acetyl-alpha-D-muramoyl-L-alanine + ADP + phosphate + H(+). Its pathway is cell wall biogenesis; peptidoglycan biosynthesis. Cell wall formation. This Staphylococcus epidermidis (strain ATCC 12228 / FDA PCI 1200) protein is UDP-N-acetylmuramate--L-alanine ligase.